Here is a 413-residue protein sequence, read N- to C-terminus: Probable tRNA sulfurtransferase (413 aa).

One can recognise a THUMP domain in the interval 61–171 (TRVLDRVTRV…EDGTYIFTEK (111 aa)). Residues 189–190 (ML), 214–215 (HF), R275, G297, and Q306 contribute to the ATP site.

This sequence belongs to the ThiI family.

The protein localises to the cytoplasm. It carries out the reaction [ThiI sulfur-carrier protein]-S-sulfanyl-L-cysteine + a uridine in tRNA + 2 reduced [2Fe-2S]-[ferredoxin] + ATP + H(+) = [ThiI sulfur-carrier protein]-L-cysteine + a 4-thiouridine in tRNA + 2 oxidized [2Fe-2S]-[ferredoxin] + AMP + diphosphate. The enzyme catalyses [ThiS sulfur-carrier protein]-C-terminal Gly-Gly-AMP + S-sulfanyl-L-cysteinyl-[cysteine desulfurase] + AH2 = [ThiS sulfur-carrier protein]-C-terminal-Gly-aminoethanethioate + L-cysteinyl-[cysteine desulfurase] + A + AMP + 2 H(+). The protein operates within cofactor biosynthesis; thiamine diphosphate biosynthesis. In terms of biological role, catalyzes the ATP-dependent transfer of a sulfur to tRNA to produce 4-thiouridine in position 8 of tRNAs, which functions as a near-UV photosensor. Also catalyzes the transfer of sulfur to the sulfur carrier protein ThiS, forming ThiS-thiocarboxylate. This is a step in the synthesis of thiazole, in the thiamine biosynthesis pathway. The sulfur is donated as persulfide by IscS. This chain is Probable tRNA sulfurtransferase, found in Natranaerobius thermophilus (strain ATCC BAA-1301 / DSM 18059 / JW/NM-WN-LF).